The chain runs to 314 residues: Methionyl-tRNA formyltransferase (314 aa).

110–113 contacts (6S)-5,6,7,8-tetrahydrofolate; that stretch reads SLLP.

Belongs to the Fmt family.

It catalyses the reaction L-methionyl-tRNA(fMet) + (6R)-10-formyltetrahydrofolate = N-formyl-L-methionyl-tRNA(fMet) + (6S)-5,6,7,8-tetrahydrofolate + H(+). In terms of biological role, attaches a formyl group to the free amino group of methionyl-tRNA(fMet). The formyl group appears to play a dual role in the initiator identity of N-formylmethionyl-tRNA by promoting its recognition by IF2 and preventing the misappropriation of this tRNA by the elongation apparatus. The polypeptide is Methionyl-tRNA formyltransferase (Levilactobacillus brevis (strain ATCC 367 / BCRC 12310 / CIP 105137 / JCM 1170 / LMG 11437 / NCIMB 947 / NCTC 947) (Lactobacillus brevis)).